The chain runs to 461 residues: MRTDWVAKRKNDPIRTQMHYARKGIITEEMHYIAKRESISPELIRSEVARGRMIIPANVNHANLEPMCIGVASKCKINSNIGNSSVVSDIAGELEKLEYSVKYGADTVMDLSTGGDIPAIRKAIIGASPIPIGTVPIYEALSRVRRVEDLSAQVMLEVIEEQAEQGVDYMTIHAGILVQHIPLTTKRVTGIVSRGGSILAEWMVKNHKQNFLYECFEDICKILQKHDVSFSLGDGLRPGSIADASDAAQFAELKTLGELTQVAWKHDVQTMIEGPGHIPMDQIEMQVIKEKELCFEAPFYTLGPLVTDIAPGYDHITSAIGAAMIGWYGASMLCYVTPKEHLGLPNREDVKAGIIAYKIAAHAADIARHRPGVRDRDDALSRARYRFDWKEQFALSLDPETARSMHDETLPEDGFKDAHFCSMCGPKFCSMNISAKVESFTADDAAAVLSGAAPESLVNIE.

Substrate-binding positions include Asn-80, Met-109, Tyr-138, His-173, Ser-193 to Gly-195, Asp-234 to Arg-237, and Glu-273. Zn(2+) is bound at residue His-277. Tyr-300 is a binding site for substrate. A Zn(2+)-binding site is contributed by His-341. Cys-421, Cys-424, and Cys-429 together coordinate [4Fe-4S] cluster.

Belongs to the ThiC family. [4Fe-4S] cluster is required as a cofactor.

The catalysed reaction is 5-amino-1-(5-phospho-beta-D-ribosyl)imidazole + S-adenosyl-L-methionine = 4-amino-2-methyl-5-(phosphooxymethyl)pyrimidine + CO + 5'-deoxyadenosine + formate + L-methionine + 3 H(+). It participates in cofactor biosynthesis; thiamine diphosphate biosynthesis. In terms of biological role, catalyzes the synthesis of the hydroxymethylpyrimidine phosphate (HMP-P) moiety of thiamine from aminoimidazole ribotide (AIR) in a radical S-adenosyl-L-methionine (SAM)-dependent reaction. In Solibacter usitatus (strain Ellin6076), this protein is Phosphomethylpyrimidine synthase.